The following is a 235-amino-acid chain: Glucosamine-6-phosphate deaminase (235 aa).

Residue D62 is the Proton acceptor; for enolization step of the active site. N128 (for ring-opening step) is an active-site residue. Residue H130 is the Proton acceptor; for ring-opening step of the active site. Catalysis depends on E135, which acts as the For ring-opening step.

The protein belongs to the glucosamine/galactosamine-6-phosphate isomerase family. NagB subfamily.

It catalyses the reaction alpha-D-glucosamine 6-phosphate + H2O = beta-D-fructose 6-phosphate + NH4(+). It functions in the pathway amino-sugar metabolism; N-acetylneuraminate degradation; D-fructose 6-phosphate from N-acetylneuraminate: step 5/5. Its function is as follows. Catalyzes the reversible isomerization-deamination of glucosamine 6-phosphate (GlcN6P) to form fructose 6-phosphate (Fru6P) and ammonium ion. The chain is Glucosamine-6-phosphate deaminase from Lactococcus lactis subsp. cremoris (strain SK11).